Here is a 212-residue protein sequence, read N- to C-terminus: Protein-L-isoaspartate O-methyltransferase (212 aa).

Ser60 is a catalytic residue.

This sequence belongs to the methyltransferase superfamily. L-isoaspartyl/D-aspartyl protein methyltransferase family.

It is found in the cytoplasm. It carries out the reaction [protein]-L-isoaspartate + S-adenosyl-L-methionine = [protein]-L-isoaspartate alpha-methyl ester + S-adenosyl-L-homocysteine. Catalyzes the methyl esterification of L-isoaspartyl residues in peptides and proteins that result from spontaneous decomposition of normal L-aspartyl and L-asparaginyl residues. It plays a role in the repair and/or degradation of damaged proteins. This Methanococcus maripaludis (strain DSM 14266 / JCM 13030 / NBRC 101832 / S2 / LL) protein is Protein-L-isoaspartate O-methyltransferase.